A 344-amino-acid chain; its full sequence is Selenide, water dikinase (344 aa).

Residue C16 is part of the active site. Residues K19 and 47 to 49 (SRD) each bind ATP. D50 provides a ligand contact to Mg(2+). ATP contacts are provided by residues D67, D90, and 138–140 (GHS). Mg(2+) is bound at residue D90. D226 is a Mg(2+) binding site.

This sequence belongs to the selenophosphate synthase 1 family. Class I subfamily. In terms of assembly, homodimer. It depends on Mg(2+) as a cofactor.

The enzyme catalyses hydrogenselenide + ATP + H2O = selenophosphate + AMP + phosphate + 2 H(+). Its function is as follows. Synthesizes selenophosphate from selenide and ATP. This is Selenide, water dikinase from Bordetella bronchiseptica (strain ATCC BAA-588 / NCTC 13252 / RB50) (Alcaligenes bronchisepticus).